Consider the following 621-residue polypeptide: Myosin-binding protein C, slow-type (621 aa).

Ig-like C2-type domains lie at 1-53 (EEIV…VDLR), 54-142 (PLKI…HVID), and 144-241 (PKII…LWIS). At Thr28 the chain carries Phosphothreonine. The residue at position 233 (Ser233) is a Phosphoserine. 3 consecutive Fibronectin type-III domains span residues 244 to 343 (LRLA…TSPP), 344 to 459 (TLLA…IEPP), and 556 to 621 (PPQA…VIGN). The residue at position 420 (Thr420) is a Phosphothreonine. Tyr445 bears the Phosphotyrosine mark. Residues 459-553 (PKIRIPRHLK…ASIDIQIVDR (95 aa)) enclose the Ig-like C2-type 4 domain.

The protein belongs to the immunoglobulin superfamily. MyBP family. In terms of assembly, interacts with USP25 (isoform USP25m only); the interaction prevents proteasomal degradation of MYBPC1.

Functionally, thick filament-associated protein located in the crossbridge region of vertebrate striated muscle a bands. Slow skeletal protein that binds to both myosin and actin. In vitro, binds to native thin filaments and modifies the activity of actin-activated myosin ATPase. May modulate muscle contraction or may play a more structural role. The protein is Myosin-binding protein C, slow-type (Mybpc1) of Rattus norvegicus (Rat).